We begin with the raw amino-acid sequence, 530 residues long: MEPRAVADALETGEEDAVTEALRSFNREHSQSFTFDDAQQEDRKRLAKLLVSVLEQGLSPKHRVTWLQTIRILSRDRSCLDSFASRQSLHALACYADIAISEEPIPQPPDMDVLLESLKCLCNLVLSSPTAQMLAAEARLVVRLAERVGLYRKRSYPHEVQFFDLRLLFLLTALRTDVRQQLFQELHGVRLLTDALELTLGVAPKENPLVILPAQETERAMEILKVLFNITYDSVKREVDEEDAALYRYLGTLLRHCVMADAAGDRTEEFHGHTVNLLGNLPLKCLDVLLALELHEGSLEFMGVNMDVINALLAFLEKRLHQTHRLKECVAPVLSVLTECARMHRPARKFLKAQVLPPLRDVRTRPEVGDLLRNKLVRLMTHLDTDVKRVAAEFLFVLCSESVPRFIKYTGYGNAAGLLAARGLMAGGRPEGQYSEDEDTDTEEYREAKASINPVTGRVEEKPPNPMEGMTEEQKEHEAMKLVNMFDKLSRHRLIQPMGMSPRGHLTSLQDAMCETMEGQLSSDPDSDPD.

The residue at position 435 (Ser435) is a Phosphoserine; by CK2. A Phosphothreonine; by CK2 modification is found at Thr440. Phosphothreonine is present on Thr442. 4 positions are modified to phosphoserine: Ser501, Ser522, Ser523, and Ser527.

Belongs to the synembryn family. As to quaternary structure, interacts with GDP-bound G alpha proteins GNAI1, GNAO1 and GNAQ, and with GNA13 with lower affinity. Does not interact with G-alpha proteins when they are in complex with subunits beta and gamma. Interacts (via C-terminus) with RGS14; the interaction stimulates the dissociation of the complex between RGS14 and the active GTP-bound form of GNAI1. Interacts with NCS1; interaction is favored in the absence of Ca(2+) and myristoylation of NCS1 is not required. In terms of processing, phosphorylated at Ser-435 and Thr-440 by CK2, stabilizing its interface with G alpha proteins.

Its subcellular location is the cytoplasm. It localises to the cell cortex. Its function is as follows. Chaperone that specifically binds and folds nascent G alpha proteins prior to G protein heterotrimer formation, promoting their stability and activity: folds GNAI1, GNAO1, GNA13 and GNAQ. Does not fold G(s) G-alpha proteins GNAS nor GNAL. Also acts as a guanine nucleotide exchange factor (GEF) for G alpha proteins by stimulating exchange of bound GDP for free GTP. Involved in regulation of microtubule pulling forces during mitotic movement of chromosomes by stimulating G(i)-alpha protein (GNAI1), possibly leading to release G(i)-alpha-GTP and NuMA proteins from the NuMA-GPSM2-G(i)-alpha-GDP complex. Also acts as an activator for G(q)-alpha (GNAQ) protein by enhancing the G(q)-coupled receptor-mediated ERK activation. This chain is Chaperone Ric-8A, found in Rattus norvegicus (Rat).